The primary structure comprises 200 residues: 3-isopropylmalate dehydratase small subunit 2 (200 aa).

Belongs to the LeuD family. LeuD type 1 subfamily. Heterodimer of LeuC and LeuD.

It catalyses the reaction (2R,3S)-3-isopropylmalate = (2S)-2-isopropylmalate. It participates in amino-acid biosynthesis; L-leucine biosynthesis; L-leucine from 3-methyl-2-oxobutanoate: step 2/4. Its function is as follows. Catalyzes the isomerization between 2-isopropylmalate and 3-isopropylmalate, via the formation of 2-isopropylmaleate. This is 3-isopropylmalate dehydratase small subunit 2 from Mannheimia succiniciproducens (strain KCTC 0769BP / MBEL55E).